The following is a 189-amino-acid chain: Photosystem I assembly protein Ycf4 (189 aa).

Helical transmembrane passes span 25-45 (SVYFWAVALTGGGLGFTLAGL) and 62-82 (LVFIPQGIAMLFYGVLGSLAG).

It belongs to the Ycf4 family.

It is found in the cellular thylakoid membrane. Seems to be required for the assembly of the photosystem I complex. In Synechococcus sp. (strain JA-2-3B'a(2-13)) (Cyanobacteria bacterium Yellowstone B-Prime), this protein is Photosystem I assembly protein Ycf4.